The sequence spans 480 residues: Salicylate hydroxylase asL1 (480 aa).

A helical membrane pass occupies residues 17–37 (PMEIAIVGGGIVGVILAIGLT). Residues Glu47 and Ala60 each contribute to the FAD site. N-linked (GlcNAc...) asparagine glycosylation is present at Asn87. FAD is bound at residue Arg131. Asn168 carries an N-linked (GlcNAc...) asparagine glycan. Catalysis depends on residues Arg213 and Tyr246. N-linked (GlcNAc...) asparagine glycosylation occurs at Asn250. FAD contacts are provided by Asp329 and Ala342. N-linked (GlcNAc...) asparagine glycosylation is found at Asn400 and Asn464.

It belongs to the paxM FAD-dependent monooxygenase family. It depends on FAD as a cofactor.

It localises to the membrane. It participates in secondary metabolite biosynthesis; terpenoid biosynthesis. Its function is as follows. Salicylate hydroxylase; part of the gene cluster that mediates the biosynthesis of xenovulene A, an unusual meroterpenoid that has potent inhibitory effects on the human gamma-aminobutyrate A (GABAA) benzodiazepine receptor. The first step of xenovulene A biosynthesis is the biosynthesis of 3-methylorcinaldehyde performed by the non-reducing polyketide synthase aspks1. The salicylate hydroxylase asL1 then catalyzes the oxidative dearomatization of 3-methylorcinaldehyde to yield a dearomatized hydroxycyclohexadione. The 2-oxoglutarate-dependent dioxygenase asL3 further catalyzes the oxidative ring expansion to provide the first tropolone metabolite. The cytochrome P450 monooxygenase asR2 allows the synthesis of tropolone hemiacetal. In parallel, a previously unrecognised class of terpene cyclase, asR6, produces alpha-humulene from farnesylpyrophosphate (FPP). The putative Diels-Alderase asR5 probably catalyzes the formation of the tropolone-humulene skeleton by linking humulene and the polyketide moiety. Oxidative-ring contractions catalyzed by asL4 and asL6 then processively remove carbon atoms from the polyketide to yield xenovulene A. The sequence is that of Salicylate hydroxylase asL1 from Sarocladium schorii (Acremonium strictum (strain IMI 501407)).